The sequence spans 177 residues: Large ribosomal subunit protein uL6 (177 aa).

This sequence belongs to the universal ribosomal protein uL6 family. As to quaternary structure, part of the 50S ribosomal subunit.

Its function is as follows. This protein binds to the 23S rRNA, and is important in its secondary structure. It is located near the subunit interface in the base of the L7/L12 stalk, and near the tRNA binding site of the peptidyltransferase center. The sequence is that of Large ribosomal subunit protein uL6 from Rhizorhabdus wittichii (strain DSM 6014 / CCUG 31198 / JCM 15750 / NBRC 105917 / EY 4224 / RW1) (Sphingomonas wittichii).